Consider the following 400-residue polypeptide: Serine/threonine transporter SstT (400 aa).

Helical transmembrane passes span 14-34 (IIIA…VTPY), 48-68 (SVAP…FQVG), 76-96 (VLLL…IASL), 136-156 (AISE…GLAM), 177-197 (IIHK…AVTF), 211-231 (LLAV…PILV), 285-305 (IPLG…VLTL), 311-331 (LGIH…TISA), and 349-371 (CSLF…IISV).

It belongs to the dicarboxylate/amino acid:cation symporter (DAACS) (TC 2.A.23) family.

It localises to the cell inner membrane. The catalysed reaction is L-serine(in) + Na(+)(in) = L-serine(out) + Na(+)(out). The enzyme catalyses L-threonine(in) + Na(+)(in) = L-threonine(out) + Na(+)(out). Involved in the import of serine and threonine into the cell, with the concomitant import of sodium (symport system). This Acinetobacter baumannii (strain ATCC 17978 / DSM 105126 / CIP 53.77 / LMG 1025 / NCDC KC755 / 5377) protein is Serine/threonine transporter SstT.